We begin with the raw amino-acid sequence, 238 residues long: Uridylate kinase (238 aa).

12 to 15 lines the ATP pocket; it reads KLSG. Glycine 54 lines the UMP pocket. ATP-binding residues include glycine 55 and arginine 59. UMP-binding positions include aspartate 74 and 135–142; that span reads TGNPFFTT. Residues threonine 162, tyrosine 168, and aspartate 171 each contribute to the ATP site.

Belongs to the UMP kinase family. Homohexamer.

The protein resides in the cytoplasm. The enzyme catalyses UMP + ATP = UDP + ADP. The protein operates within pyrimidine metabolism; CTP biosynthesis via de novo pathway; UDP from UMP (UMPK route): step 1/1. Its activity is regulated as follows. Inhibited by UTP. In terms of biological role, catalyzes the reversible phosphorylation of UMP to UDP. The protein is Uridylate kinase of Janthinobacterium sp. (strain Marseille) (Minibacterium massiliensis).